A 65-amino-acid chain; its full sequence is Large ribosomal subunit protein bL35 (65 aa).

The protein belongs to the bacterial ribosomal protein bL35 family.

This chain is Large ribosomal subunit protein bL35, found in Clostridium acetobutylicum (strain ATCC 824 / DSM 792 / JCM 1419 / IAM 19013 / LMG 5710 / NBRC 13948 / NRRL B-527 / VKM B-1787 / 2291 / W).